Reading from the N-terminus, the 162-residue chain is ATP synthase subunit b 1 (162 aa).

Residues 1–21 (MLLTAEFWVAVAFVAFLVIVW) form a helical membrane-spanning segment.

The protein belongs to the ATPase B chain family. As to quaternary structure, F-type ATPases have 2 components, F(1) - the catalytic core - and F(0) - the membrane proton channel. F(1) has five subunits: alpha(3), beta(3), gamma(1), delta(1), epsilon(1). F(0) has three main subunits: a(1), b(2) and c(10-14). The alpha and beta chains form an alternating ring which encloses part of the gamma chain. F(1) is attached to F(0) by a central stalk formed by the gamma and epsilon chains, while a peripheral stalk is formed by the delta and b chains.

The protein localises to the cell inner membrane. In terms of biological role, f(1)F(0) ATP synthase produces ATP from ADP in the presence of a proton or sodium gradient. F-type ATPases consist of two structural domains, F(1) containing the extramembraneous catalytic core and F(0) containing the membrane proton channel, linked together by a central stalk and a peripheral stalk. During catalysis, ATP synthesis in the catalytic domain of F(1) is coupled via a rotary mechanism of the central stalk subunits to proton translocation. Functionally, component of the F(0) channel, it forms part of the peripheral stalk, linking F(1) to F(0). This is ATP synthase subunit b 1 from Methylorubrum extorquens (strain PA1) (Methylobacterium extorquens).